The sequence spans 249 residues: ATP synthase subunit a (249 aa).

6 helical membrane-spanning segments follow: residues 26–46 (FTNV…FLYL), 84–104 (FFPF…IGLF), 114–134 (IIVT…YGFF), 143–163 (LFVP…IEII), 185–205 (ITLK…ALGI), and 208–228 (TVLP…VAFL).

It belongs to the ATPase A chain family. As to quaternary structure, F-type ATPases have 2 components, CF(1) - the catalytic core - and CF(0) - the membrane proton channel. CF(1) has five subunits: alpha(3), beta(3), gamma(1), delta(1), epsilon(1). CF(0) has three main subunits: a(1), b(2) and c(9-12). The alpha and beta chains form an alternating ring which encloses part of the gamma chain. CF(1) is attached to CF(0) by a central stalk formed by the gamma and epsilon chains, while a peripheral stalk is formed by the delta and b chains.

It is found in the cell inner membrane. Key component of the proton channel; it plays a direct role in the translocation of protons across the membrane. In Brucella ovis (strain ATCC 25840 / 63/290 / NCTC 10512), this protein is ATP synthase subunit a.